Consider the following 143-residue polypeptide: MAKKIIGFIKLQIPAGKANPSPPVGPALGQRGLNIMEFCKAFNAQTQGMEPGLPVPVVITAFADKSFTFVMKTPPATVLIKKAAKVDKGSSKPHTDKVGSITRAQAEEIAKTKMPDLTAADLDAAVRTIAGSARSMGITVEGV.

The protein belongs to the universal ribosomal protein uL11 family. Part of the ribosomal stalk of the 50S ribosomal subunit. Interacts with L10 and the large rRNA to form the base of the stalk. L10 forms an elongated spine to which L12 dimers bind in a sequential fashion forming a multimeric L10(L12)X complex. In terms of processing, one or more lysine residues are methylated.

Functionally, forms part of the ribosomal stalk which helps the ribosome interact with GTP-bound translation factors. This Burkholderia cenocepacia (strain HI2424) protein is Large ribosomal subunit protein uL11.